The sequence spans 406 residues: NIPA-like protein 3 (406 aa).

The next 4 helical transmembrane spans lie at 33–53 (NLIG…ALNL), 76–96 (WWLG…SYAF), 101–121 (LIVP…IIFI), and 135–155 (VLSF…VTFA). N-linked (GlcNAc...) asparagine glycosylation occurs at Asn-166. The next 5 helical transmembrane spans lie at 171–191 (LVSW…CLLL), 202–222 (IVVI…TVKA), 240–260 (PIFY…AAFL), 271–291 (LIAS…GAIF), and 300–320 (VLHI…VFLI). Residue Ser-372 is modified to Phosphoserine.

This sequence belongs to the NIPA family.

It is found in the membrane. This chain is NIPA-like protein 3 (NIPAL3), found in Homo sapiens (Human).